A 126-amino-acid chain; its full sequence is Holo-[acyl-carrier-protein] synthase (126 aa).

Mg(2+) is bound by residues Asp-9 and Glu-58.

This sequence belongs to the P-Pant transferase superfamily. AcpS family. The cofactor is Mg(2+).

It is found in the cytoplasm. It catalyses the reaction apo-[ACP] + CoA = holo-[ACP] + adenosine 3',5'-bisphosphate + H(+). Its function is as follows. Transfers the 4'-phosphopantetheine moiety from coenzyme A to a Ser of acyl-carrier-protein. The protein is Holo-[acyl-carrier-protein] synthase of Sodalis glossinidius (strain morsitans).